The following is a 343-amino-acid chain: N-acetyl-gamma-glutamyl-phosphate reductase (343 aa).

The active site involves cysteine 149.

Belongs to the NAGSA dehydrogenase family. Type 1 subfamily.

The protein localises to the cytoplasm. It catalyses the reaction N-acetyl-L-glutamate 5-semialdehyde + phosphate + NADP(+) = N-acetyl-L-glutamyl 5-phosphate + NADPH + H(+). It participates in amino-acid biosynthesis; L-arginine biosynthesis; N(2)-acetyl-L-ornithine from L-glutamate: step 3/4. In terms of biological role, catalyzes the NADPH-dependent reduction of N-acetyl-5-glutamyl phosphate to yield N-acetyl-L-glutamate 5-semialdehyde. The protein is N-acetyl-gamma-glutamyl-phosphate reductase of Alkalilimnicola ehrlichii (strain ATCC BAA-1101 / DSM 17681 / MLHE-1).